A 284-amino-acid polypeptide reads, in one-letter code: Bifunctional protein FolD (284 aa).

Residues 166 to 168, serine 191, and isoleucine 232 contribute to the NADP(+) site; that span reads GAS.

The protein belongs to the tetrahydrofolate dehydrogenase/cyclohydrolase family. Homodimer.

The enzyme catalyses (6R)-5,10-methylene-5,6,7,8-tetrahydrofolate + NADP(+) = (6R)-5,10-methenyltetrahydrofolate + NADPH. It carries out the reaction (6R)-5,10-methenyltetrahydrofolate + H2O = (6R)-10-formyltetrahydrofolate + H(+). Its pathway is one-carbon metabolism; tetrahydrofolate interconversion. Catalyzes the oxidation of 5,10-methylenetetrahydrofolate to 5,10-methenyltetrahydrofolate and then the hydrolysis of 5,10-methenyltetrahydrofolate to 10-formyltetrahydrofolate. The protein is Bifunctional protein FolD of Thiobacillus denitrificans (strain ATCC 25259 / T1).